A 147-amino-acid polypeptide reads, in one-letter code: Calcium-regulated heat stable protein 1 (147 aa).

The segment covering 1-12 (MSSEPPPPPQPP) has biased composition (pro residues). The segment at 1-49 (MSSEPPPPPQPPTHQTSIGLLDTPRARDRSPSPLRGNVVPSPLPTRRTR) is disordered. Ser-2 carries the N-acetylserine modification. Phosphoserine occurs at positions 30, 32, and 41. At Thr-45 the chain carries Phosphothreonine. Phosphoserine is present on residues Ser-52 and Ser-58. A CSD domain is found at 62 to 129 (VYKGVCKCFC…KLQAVEVVIT (68 aa)). Residues Ser-146 and Ser-147 each carry the phosphoserine modification.

Homodimer. Interacts with STYX. Post-translationally, can be phosphorylated by DYRK2 (in vitro). Dephosphorylated by calcineurin in a Ca(2+) dependent manner, and probably by PP2A or PP4 serine phosphatases in cAMP- and PKC-mediated pathways. In terms of tissue distribution, widely expressed.

The protein localises to the cytoplasm. The protein resides in the P-body. Its subcellular location is the cytoplasmic granule. In terms of biological role, binds mRNA and regulates the stability of target mRNA. The chain is Calcium-regulated heat stable protein 1 (Carhsp1) from Rattus norvegicus (Rat).